The following is a 343-amino-acid chain: Ribosomal RNA small subunit methyltransferase C (343 aa).

This sequence belongs to the methyltransferase superfamily. RsmC family. In terms of assembly, monomer.

It localises to the cytoplasm. It carries out the reaction guanosine(1207) in 16S rRNA + S-adenosyl-L-methionine = N(2)-methylguanosine(1207) in 16S rRNA + S-adenosyl-L-homocysteine + H(+). Its function is as follows. Specifically methylates the guanine in position 1207 of 16S rRNA in the 30S particle. The protein is Ribosomal RNA small subunit methyltransferase C of Shigella sonnei (strain Ss046).